A 365-amino-acid chain; its full sequence is MAFILSIGTSLPAYNVNQEKAAEFARYMFQHSFKDIDRLLSSFKNGQIHSRQFVKPIEWYKEGHSFEEKNQIYIEETLKHSRAAVRECLSHPEFFQEAIPYEKVEAVFFVSSTGLSTPSIEARLMNELPFSPYTKRIPIWGLGCAGGASGLARAAEYCKAYPEAFVLVISAELCSLTFQPEDKTKSNLIGTSLFGDGIAAALLCGEKADRRVSKLKLAPKIMDAQSVLMKQSEDVMGWDFTDQGFKVIFSRDIPTLVEKWLKTNVQIFLDKHKLSFHDISVFLAHPGGKKVIDAYIKSLGLSSEKLSSAQSILQKHGNMSSATILYVIKDHLQNGHKKEAERGLIGALGPGFSSELLLFSWEKGA.

Residue Cys-144 is part of the active site.

It belongs to the thiolase-like superfamily. Chalcone/stilbene synthases family.

It catalyses the reaction (E)-4-coumaroyl-CoA + 3 malonyl-CoA + 3 H(+) = 2',4,4',6'-tetrahydroxychalcone + 3 CO2 + 4 CoA. This Bacillus subtilis (strain 168) protein is Putative chalcone synthase (bcsA).